The following is a 338-amino-acid chain: Inositol 2-dehydrogenase (338 aa).

This sequence belongs to the Gfo/Idh/MocA family. As to quaternary structure, homotetramer.

It carries out the reaction myo-inositol + NAD(+) = scyllo-inosose + NADH + H(+). Functionally, involved in the oxidation of myo-inositol (MI) to 2-keto-myo-inositol (2KMI or 2-inosose). This is Inositol 2-dehydrogenase from Azotobacter vinelandii (strain DJ / ATCC BAA-1303).